The primary structure comprises 631 residues: Probable potassium transport system protein Kup 1 (631 aa).

12 helical membrane-spanning segments follow: residues 16–36 (LGLS…SPLY), 58–78 (VLSL…LVFV), 109–129 (VLVF…TLTP), 145–165 (PLFH…LFLI), 173–193 (VGAL…LLGI), 219–239 (GWSG…GEAL), 255–275 (WFCC…ALLL), 288–308 (LAPP…TIIA), 345–365 (IYIP…VAGF), 370–390 (GLAA…ALLV), 402–422 (PLAV…FFGA), and 427–447 (VGAG…VMIT).

This sequence belongs to the HAK/KUP transporter (TC 2.A.72) family.

It is found in the cell inner membrane. It catalyses the reaction K(+)(in) + H(+)(in) = K(+)(out) + H(+)(out). Transport of potassium into the cell. Likely operates as a K(+):H(+) symporter. This is Probable potassium transport system protein Kup 1 from Geobacter sulfurreducens (strain ATCC 51573 / DSM 12127 / PCA).